The primary structure comprises 1440 residues: MGARASVLSGGKLDAWEKIRLRPGGKKKYRLKHLVWASRELERFALNPGLLETGEGCQQIMEQLQSTLKTGSEEIKSLYNTVATLYCVHQRIDVKDTKEALDKIEEIQNKSRQKTQQAAAAQQAAAATKNSSSVSQNYPIVQNAQGQMIHQAISPRTLNAWVKVIEEKAFSPEVIPMFSALSEGATPQDLNMMLNIVGGHQAAMQMLKDTINEEAADWDRVHPVHAGPIPPGQMREPRGSDIAGTTSTLQEQIGWMTSNPPIPVGDIYKRWIILGLNKIVRMYSPVSILDIRQGPKEPFRDYVDRFFKTLRAEQATQEVKNWMTETLLVQNANPDCKTILKALGPGATLEEMMTACQGVGGPSHKARVLAEAMSQATNSTAAIMMQRGNFKGQKRIKCFNCGKEGHLARNCRAPRKKGCWKCGKEGHQMKDCTERQANFLRENLAFPQGKAREFPSEQTRANSPTSRELRVWGGDKTLSETGAERQGIVSFSFPQITLWQRPVVTVRVGGQLKEALLDTGADDTVLEEINLPGKWKPKMIGGIGGFIKVRQYDQILIEICGKKAIGTILVGPTPVNIIGRNMLTQIGCTLNFPISPIETVPVKLKPGMDGPRVKQWPLTEEKIKALTEICKDMEKEGKILKIGPENPYNTPVFAIKKKDSTKWRKLVNFRELNKRTQDFWEVQLGIPHPAGLKKKKSVTVLDVGDAYFSVPLDEDFRKYTAFTIPSINNETPGIRYQYNVLPQGWKGSPAIFQSSMTKILEPFRTKNPEIVIYQYMDDLYVGSDLEIGQHRTKIEELREHLLKWGFTTPDKKHQKEPPFLWMGYELHPDKWTVQPIQLPDKESWTVNDIQKLVGKLNWASQIYPGIKVKQLCKLLRGAKALTDIVPLTAEAELELAENREILKEPVHGVYYDPSKDLIAEIQKQGQGQWTYQIYQEQYKNLKTGKYARIKSAHTNDVKQLTEAVQKIAQESIVIWGKTPKFRLPIQKETWEAWWTEYWQATWIPEWEFVNTPPLVKLWYQLETEPIVGAETFYVDGAANRETKKGKAGYVTDRGRQKVVSLTETTNQKTELQAIHLALQDSGSEVNIVTDSQYALGIIQAQPDKSESEIVNQIIEQLIQKDKVYLSWVPAHKGIGGNEQVDKLVSSGIRKVLFLDGIDKAQEEHEKYHSNWRAMASDFNLPPIVAKEIVASCDKCQLKGEAMHGQVDCSPGIWQLDCTHLEGKIIIVAVHVASGYIEAEVIPAETGQETAYFILKLAGRWPVKVVHTDNGSNFTSAAVKAACWWANIKQEFGIPYNPQSQGVVESMNKELKKIIGQVREQAEHLKTAVQMAVFIHNFKRKGGIGGYSAGERIIDMIATDIQTKELQKQITKIQNFRVYYRDNRDPIWKGPAKLLWKGEGAVVIQDNSDIKVVPRRKAKIIRDYGKQMAGDDCVAGGQDED.

Gly2 is lipidated: N-myristoyl glycine; by host. The tract at residues 7-31 (VLSGGKLDAWEKIRLRPGGKKKYRL) is interaction with Gp41. Residues 8–43 (LSGGKLDAWEKIRLRPGGKKKYRLKHLVWASRELER) form an interaction with host CALM1 region. Residues 12-19 (KLDAWEKI) are interaction with host AP3D1. The tract at residues 14–33 (DAWEKIRLRPGGKKKYRLKH) is interaction with membrane phosphatidylinositol 4,5-bisphosphate and RNA. A Nuclear export signal motif is present at residues 16–22 (WEKIRLR). A Nuclear localization signal motif is present at residues 26-32 (KKKYRLK). An interaction with membrane phosphatidylinositol 4,5-bisphosphate region spans residues 73 to 77 (EEIKS). Phosphotyrosine; by host is present on Tyr138. Residues 195–233 (NIVGGHQAAMQMLKDTINEEAADWDRVHPVHAGPIPPGQ) are interaction with human PPIA/CYPA and NUP153. Residues 283–369 (YSPVSILDIR…GGPSHKARVL (87 aa)) are dimerization/Multimerization of capsid protein p24. 2 CCHC-type zinc fingers span residues 396–413 (IKCFNCGKEGHLARNCRA) and 417–434 (KGCWKCGKEGHQMKDCTE). A dimerization of protease region spans residues 494 to 498 (PQITL). Residues 513–582 (KEALLDTGAD…TPVNIIGRNM (70 aa)) enclose the Peptidase A2 domain. The active-site For protease activity; shared with dimeric partner is the Asp518. Dimerization of protease regions lie at residues 542–548 (GIGGFIK) and 581–593 (NMLTQIGCTLNFP). Residues 636 to 826 (EGKILKIGPE…PPFLWMGYEL (191 aa)) form the Reverse transcriptase domain. Residues Asp702, Asp777, and Asp778 each coordinate Mg(2+). The segment at 819 to 827 (FLWMGYELH) is RT 'primer grip'. Positions 990–1006 (WEAWWTEYWQATWIPEW) match the Tryptophan repeat motif motif. The 124-residue stretch at 1026–1149 (IVGAETFYVD…VDKLVSSGIR (124 aa)) folds into the RNase H type-1 domain. Residues Asp1035, Glu1070, Asp1090, and Asp1141 each contribute to the Mg(2+) site. The Integrase-type zinc-finger motif lies at 1155–1196 (DGIDKAQEEHEKYHSNWRAMASDFNLPPIVAKEIVASCDKCQ). Residues His1164, His1168, Cys1192, and Cys1195 each coordinate Zn(2+). Residues 1206 to 1356 (VDCSPGIWQL…SAGERIIDMI (151 aa)) enclose the Integrase catalytic domain. 3 residues coordinate Mg(2+): Asp1216, Asp1268, and Glu1304. The segment at residues 1375–1422 (FRVYYRDNRDPIWKGPAKLLWKGEGAVVIQDNSDIKVVPRRKAKIIRD) is a DNA-binding region (integrase-type).

In terms of assembly, homotrimer; further assembles as hexamers of trimers. Interacts with gp41 (via C-terminus). Interacts with host CALM1; this interaction induces a conformational change in the Matrix protein, triggering exposure of the myristate group. Interacts with host AP3D1; this interaction allows the polyprotein trafficking to multivesicular bodies during virus assembly. Part of the pre-integration complex (PIC) which is composed of viral genome, matrix protein, Vpr and integrase. As to quaternary structure, homodimer; the homodimer further multimerizes as homohexamers or homopentamers. Interacts with human PPIA/CYPA; This interaction stabilizes the capsid. Interacts with human NUP153. Interacts with host PDZD8; this interaction stabilizes the capsid. Interacts with monkey TRIM5; this interaction destabilizes the capsid. Homodimer, whose active site consists of two apposed aspartic acid residues. In terms of assembly, heterodimer of p66 RT and p51 RT (RT p66/p51). Heterodimerization of RT is essential for DNA polymerase activity. The overall folding of the subdomains is similar in p66 RT and p51 RT but the spatial arrangements of the subdomains are dramatically different. As to quaternary structure, homotetramer; may further associate as a homohexadecamer. Part of the pre-integration complex (PIC) which is composed of viral genome, matrix protein, Vpr and integrase. Interacts with human SMARCB1/INI1 and human PSIP1/LEDGF isoform 1. Interacts with human KPNA3; this interaction might play a role in nuclear import of the pre-integration complex. Interacts with human NUP153; this interaction might play a role in nuclear import of the pre-integration complex. It depends on Mg(2+) as a cofactor. In terms of processing, specific enzymatic cleavages by the viral protease yield mature proteins. The protease is released by autocatalytic cleavage. The polyprotein is cleaved during and after budding, this process is termed maturation. Proteolytic cleavage of p66 RT removes the RNase H domain to yield the p51 RT subunit. Nucleocapsid protein p7 might be further cleaved after virus entry. Post-translationally, tyrosine phosphorylated presumably in the virion by a host kinase. Phosphorylation is apparently not a major regulator of membrane association. Phosphorylated possibly by host MAPK1; this phosphorylation is necessary for Pin1-mediated virion uncoating. In terms of processing, methylated by host PRMT6, impairing its function by reducing RNA annealing and the initiation of reverse transcription.

Its subcellular location is the host cell membrane. It is found in the host endosome. The protein localises to the host multivesicular body. It localises to the virion membrane. The protein resides in the host nucleus. Its subcellular location is the host cytoplasm. It is found in the virion. The enzyme catalyses Specific for a P1 residue that is hydrophobic, and P1' variable, but often Pro.. It catalyses the reaction Endohydrolysis of RNA in RNA/DNA hybrids. Three different cleavage modes: 1. sequence-specific internal cleavage of RNA. Human immunodeficiency virus type 1 and Moloney murine leukemia virus enzymes prefer to cleave the RNA strand one nucleotide away from the RNA-DNA junction. 2. RNA 5'-end directed cleavage 13-19 nucleotides from the RNA end. 3. DNA 3'-end directed cleavage 15-20 nucleotides away from the primer terminus.. It carries out the reaction 3'-end directed exonucleolytic cleavage of viral RNA-DNA hybrid.. The catalysed reaction is DNA(n) + a 2'-deoxyribonucleoside 5'-triphosphate = DNA(n+1) + diphosphate. Its activity is regulated as follows. Protease: The viral protease is inhibited by many synthetic protease inhibitors (PIs), such as amprenavir, atazanavir, indinavir, loprinavir, nelfinavir, ritonavir and saquinavir. Use of protease inhibitors in tritherapy regimens permit more ambitious therapeutic strategies. Reverse transcriptase/ribonuclease H: RT can be inhibited either by nucleoside RT inhibitors (NRTIs) or by non nucleoside RT inhibitors (NNRTIs). NRTIs act as chain terminators, whereas NNRTIs inhibit DNA polymerization by binding a small hydrophobic pocket near the RT active site and inducing an allosteric change in this region. Classical NRTIs are abacavir, adefovir (PMEA), didanosine (ddI), lamivudine (3TC), stavudine (d4T), tenofovir (PMPA), zalcitabine (ddC), and zidovudine (AZT). Classical NNRTIs are atevirdine (BHAP U-87201E), delavirdine, efavirenz (DMP-266), emivirine (I-EBU), and nevirapine (BI-RG-587). The tritherapies used as a basic effective treatment of AIDS associate two NRTIs and one NNRTI. In terms of biological role, mediates, with Gag polyprotein, the essential events in virion assembly, including binding the plasma membrane, making the protein-protein interactions necessary to create spherical particles, recruiting the viral Env proteins, and packaging the genomic RNA via direct interactions with the RNA packaging sequence (Psi). Gag-Pol polyprotein may regulate its own translation, by the binding genomic RNA in the 5'-UTR. At low concentration, the polyprotein would promote translation, whereas at high concentration, the polyprotein would encapsidate genomic RNA and then shut off translation. Functionally, targets the polyprotein to the plasma membrane via a multipartite membrane-binding signal, that includes its myristoylated N-terminus. Matrix protein is part of the pre-integration complex. Implicated in the release from host cell mediated by Vpu. Binds to RNA. Its function is as follows. Forms the conical core that encapsulates the genomic RNA-nucleocapsid complex in the virion. Most core are conical, with only 7% tubular. The core is constituted by capsid protein hexamer subunits. The core is disassembled soon after virion entry. Host restriction factors such as TRIM5-alpha or TRIMCyp bind retroviral capsids and cause premature capsid disassembly, leading to blocks in reverse transcription. Capsid restriction by TRIM5 is one of the factors which restricts HIV-1 to the human species. Host PIN1 apparently facilitates the virion uncoating. On the other hand, interactions with PDZD8 or CYPA stabilize the capsid. Encapsulates and protects viral dimeric unspliced genomic RNA (gRNA). Binds these RNAs through its zinc fingers. Acts as a nucleic acid chaperone which is involved in rearangement of nucleic acid secondary structure during gRNA retrotranscription. Also facilitates template switch leading to recombination. As part of the polyprotein, participates in gRNA dimerization, packaging, tRNA incorporation and virion assembly. In terms of biological role, aspartyl protease that mediates proteolytic cleavages of Gag and Gag-Pol polyproteins during or shortly after the release of the virion from the plasma membrane. Cleavages take place as an ordered, step-wise cascade to yield mature proteins. This process is called maturation. Displays maximal activity during the budding process just prior to particle release from the cell. Also cleaves Nef and Vif, probably concomitantly with viral structural proteins on maturation of virus particles. Hydrolyzes host EIF4GI and PABP1 in order to shut off the capped cellular mRNA translation. The resulting inhibition of cellular protein synthesis serves to ensure maximal viral gene expression and to evade host immune response. Also mediates cleavage of host YTHDF3. Mediates cleavage of host CARD8, thereby activating the CARD8 inflammasome, leading to the clearance of latent HIV-1 in patient CD4(+) T-cells after viral reactivation; in contrast, HIV-1 can evade CARD8-sensing when its protease remains inactive in infected cells prior to viral budding. Functionally, multifunctional enzyme that converts the viral RNA genome into dsDNA in the cytoplasm, shortly after virus entry into the cell. This enzyme displays a DNA polymerase activity that can copy either DNA or RNA templates, and a ribonuclease H (RNase H) activity that cleaves the RNA strand of RNA-DNA heteroduplexes in a partially processive 3' to 5' endonucleasic mode. Conversion of viral genomic RNA into dsDNA requires many steps. A tRNA(3)-Lys binds to the primer-binding site (PBS) situated at the 5'-end of the viral RNA. RT uses the 3' end of the tRNA primer to perform a short round of RNA-dependent minus-strand DNA synthesis. The reading proceeds through the U5 region and ends after the repeated (R) region which is present at both ends of viral RNA. The portion of the RNA-DNA heteroduplex is digested by the RNase H, resulting in a ssDNA product attached to the tRNA primer. This ssDNA/tRNA hybridizes with the identical R region situated at the 3' end of viral RNA. This template exchange, known as minus-strand DNA strong stop transfer, can be either intra- or intermolecular. RT uses the 3' end of this newly synthesized short ssDNA to perform the RNA-dependent minus-strand DNA synthesis of the whole template. RNase H digests the RNA template except for two polypurine tracts (PPTs) situated at the 5'-end and near the center of the genome. It is not clear if both polymerase and RNase H activities are simultaneous. RNase H probably can proceed both in a polymerase-dependent (RNA cut into small fragments by the same RT performing DNA synthesis) and a polymerase-independent mode (cleavage of remaining RNA fragments by free RTs). Secondly, RT performs DNA-directed plus-strand DNA synthesis using the PPTs that have not been removed by RNase H as primers. PPTs and tRNA primers are then removed by RNase H. The 3' and 5' ssDNA PBS regions hybridize to form a circular dsDNA intermediate. Strand displacement synthesis by RT to the PBS and PPT ends produces a blunt ended, linear dsDNA copy of the viral genome that includes long terminal repeats (LTRs) at both ends. Its function is as follows. Catalyzes viral DNA integration into the host chromosome, by performing a series of DNA cutting and joining reactions. This enzyme activity takes place after virion entry into a cell and reverse transcription of the RNA genome in dsDNA. The first step in the integration process is 3' processing. This step requires a complex comprising the viral genome, matrix protein, Vpr and integrase. This complex is called the pre-integration complex (PIC). The integrase protein removes 2 nucleotides from each 3' end of the viral DNA, leaving recessed CA OH's at the 3' ends. In the second step, the PIC enters cell nucleus. This process is mediated through integrase and Vpr proteins, and allows the virus to infect a non dividing cell. This ability to enter the nucleus is specific of lentiviruses, other retroviruses cannot and rely on cell division to access cell chromosomes. In the third step, termed strand transfer, the integrase protein joins the previously processed 3' ends to the 5' ends of strands of target cellular DNA at the site of integration. The 5'-ends are produced by integrase-catalyzed staggered cuts, 5 bp apart. A Y-shaped, gapped, recombination intermediate results, with the 5'-ends of the viral DNA strands and the 3' ends of target DNA strands remaining unjoined, flanking a gap of 5 bp. The last step is viral DNA integration into host chromosome. This involves host DNA repair synthesis in which the 5 bp gaps between the unjoined strands are filled in and then ligated. Since this process occurs at both cuts flanking the HIV genome, a 5 bp duplication of host DNA is produced at the ends of HIV-1 integration. Alternatively, Integrase may catalyze the excision of viral DNA just after strand transfer, this is termed disintegration. This Human immunodeficiency virus type 1 group M subtype A (isolate MAL) (HIV-1) protein is Gag-Pol polyprotein (gag-pol).